A 451-amino-acid chain; its full sequence is Probable metal transport system membrane protein CT_069 (451 aa).

8 consecutive transmembrane segments (helical) span residues 14 to 34, 38 to 58, 70 to 90, 100 to 120, 145 to 165, 192 to 212, 233 to 253, and 269 to 289; these read SFLAVSLICMTTALWGTILLV, PLLSESLSHACYPGLLIGALL, WVIIFFGCLASVLGCLGISFL, SALCLVLVSFFGVGVILVSYV, TEAKLALIIFCLSAVVLWWWY, VLVFISLVIVSGVRSVGILLI, ILILSSIFGGICGALGCYFSV, and ILPTGPLVVFFAGVLVFLCLI. A disordered region spans residues 432-451; the sequence is PDYDPHQREIPKRTRKSDGC. A compositionally biased stretch (basic and acidic residues) spans 434–451; the sequence is YDPHQREIPKRTRKSDGC.

Belongs to the ABC-3 integral membrane protein family.

It localises to the cell inner membrane. Functionally, part of an ATP-driven transport system CT_067/CT_068/CT_069/CT_070 for a metal. The polypeptide is Probable metal transport system membrane protein CT_069 (Chlamydia trachomatis serovar D (strain ATCC VR-885 / DSM 19411 / UW-3/Cx)).